The chain runs to 307 residues: Transcription initiation factor IIB 2 (307 aa).

Residues threonine 7–glutamate 38 form a TFIIB-type zinc finger. Positions 11, 14, 30, and 33 each coordinate Zn(2+). Tandem repeats lie at residues glutamine 124–leucine 207 and serine 218–lysine 299.

This sequence belongs to the TFIIB family.

Its function is as follows. Stabilizes TBP binding to an archaeal box-A promoter. Also responsible for recruiting RNA polymerase II to the pre-initiation complex (DNA-TBP-TFIIB). The sequence is that of Transcription initiation factor IIB 2 from Thermoplasma acidophilum (strain ATCC 25905 / DSM 1728 / JCM 9062 / NBRC 15155 / AMRC-C165).